The sequence spans 502 residues: Potassium channel KAT3 (502 aa).

Topologically, residues 1 to 67 (MPRSSRMNLW…PYDPRYKVWE (67 aa)) are cytoplasmic. A helical transmembrane segment spans residues 68–88 (TFLIILVVYSAWICPLEFAFL). Residues 89–95 (RYLPSAP) lie on the Extracellular side of the membrane. Residues 96 to 116 (FVVDDVVNGFFAVDIMLTFFV) form a helical membrane-spanning segment. Residues 117-138 (PFVDKKSYLLVNDPKKIAVRYL) lie on the Cytoplasmic side of the membrane. A helical transmembrane segment spans residues 139–159 (SSWFVFDVCSTVPFHSISLLF). The Extracellular segment spans residues 160–169 (NEHGHDLGFK). A helical; Voltage-sensor transmembrane segment spans residues 170–190 (FLNVLRLWRLRRVSSMFARLE). Topologically, residues 191 to 204 (KDIRFNYAVIRCTK) are cytoplasmic. A helical transmembrane segment spans residues 205-225 (LISVTLFAIHCAGCINYLIAD). Topologically, residues 226-252 (RYPDPRRTWIGAVMPNFREDGLWIRYV) are extracellular. The segment at residues 253 to 272 (TAMYWSITTLTTTGYGDLHA) is an intramembrane region (pore-forming). At 273–276 (ENAR) the chain is on the extracellular side. Residues 277–297 (EMLFGICYMLFNLWLTAYLIG) traverse the membrane as a helical segment. Topologically, residues 298–502 (NMTNLVVHST…IRSNLQQVNV (205 aa)) are cytoplasmic. 381-500 (LFKGVSSRFI…DIIRSNLQQV (120 aa)) is an a nucleoside 3',5'-cyclic phosphate binding site.

This sequence belongs to the potassium channel family. Plant (TC 1.A.1.4) subfamily.

It localises to the membrane. In terms of biological role, probable inward-rectifying potassium channel. Assuming opened or closed conformations in response to the voltage difference across the membrane, the channel is activated by hyperpolarization. The protein is Potassium channel KAT3 of Oryza sativa subsp. japonica (Rice).